The primary structure comprises 938 residues: Histone deacetylase 7 (938 aa).

The disordered stretch occupies residues 1-40 (MHSPGAGCPALQPDTPGSQPQPMDLRVGQRPTVEPPPEPA). An interaction with MEF2C region spans residues 1 to 121 (MHSPGAGCPA…LAEVILKKQQ (121 aa)). 2 transcription repression regions span residues 2-254 (HSPG…DGDR) and 241-533 (GPNP…EHAG). The segment at 72-172 (SMDPPMPELQ…LPTEPPEHFP (101 aa)) is interaction with MEF2A. The residue at position 132 (serine 132) is a Phosphoserine. Disordered stretches follow at residues 155–280 (SFLP…HHGL), 331–361 (SGSG…APLQ), 373–463 (LIKP…DSVL), and 472–491 (RPLS…LSPE). Residue serine 178 is modified to Phosphoserine; by MARK2, MARK3 and PKD/PRKD1. Positions 190-204 (KSLERRKNPLLRKES) are enriched in basic and acidic residues. Phosphoserine; by PKD/PRKD2 is present on serine 204. A compositionally biased stretch (low complexity) spans 220 to 235 (SSPSSSSTPASGCSSP). A Phosphoserine; by PKD/PRKD1 modification is found at serine 344. Residues serine 350 and serine 398 each carry the phosphoserine modification. The segment covering 350-361 (SATASPLLAPLQ) has biased composition (low complexity). Composition is skewed to low complexity over residues 429–448 (GRGS…EQQH) and 479–491 (SSPA…LSPE). Serine 479 carries the phosphoserine; by PKD/PRKD1 modification. Serine 480 is modified (phosphoserine). A histone deacetylase region spans residues 505–852 (PATGLVYDSV…VAALLGNKVD (348 aa)). Residues cysteine 520, cysteine 522, and histidine 528 each contribute to the Zn(2+) site. At serine 582 the chain carries Phosphoserine. Cysteine 605 contributes to the Zn(2+) binding site. Histidine 657 is a catalytic residue. The interval 864–938 (NLSAIRSLEA…LVEEEEPMNL (75 aa)) is interaction with SIN3A. A Nuclear export signal motif is present at residues 904-938 (AEVEAVTALASLSVGILAEDRPSERLVEEEEPMNL).

Belongs to the histone deacetylase family. HD type 2 subfamily. In terms of assembly, interacts with HDAC1, HDAC2, HDAC3, HDAC4, HDAC5, NCOR1, NCOR2, SIN3A, SIN3B, RBBP4, RBBP7, MTA1L1, SAP30 and MBD3. Interacts with KAT5 and EDNRA. Interacts with the 14-3-3 protein YWHAE, MEF2A, MEF2B and MEF2C. Interacts with ZMYND15. Interacts with KDM5B. Interacts with PML. Interacts with FOXP3. Interacts with RARA. In terms of processing, may be phosphorylated by CaMK1. Phosphorylated by the PKC kinases PKN1 and PKN2, impairing nuclear import. Phosphorylation at Ser-178 by MARK2, MARK3 and PRKD1 promotes interaction with 14-3-3 proteins and export from the nucleus. Phosphorylation at Ser-178 is a prerequisite for phosphorylation at Ser-204. In terms of tissue distribution, highly expressed in heart and lung. Expressed at intermediate level in muscle.

The protein resides in the nucleus. It localises to the cytoplasm. It carries out the reaction N(6)-acetyl-L-lysyl-[histone] + H2O = L-lysyl-[histone] + acetate. The catalysed reaction is N(6)-acetyl-L-lysyl-[protein] + H2O = L-lysyl-[protein] + acetate. With respect to regulation, its activity is inhibited by Trichostatin A (TSA), a known histone deacetylase inhibitor. In terms of biological role, responsible for the deacetylation of lysine residues on the N-terminal part of the core histones (H2A, H2B, H3 and H4). Histone deacetylation gives a tag for epigenetic repression and plays an important role in transcriptional regulation, cell cycle progression and developmental events. Histone deacetylases act via the formation of large multiprotein complexes. Involved in muscle maturation by repressing transcription of myocyte enhancer factors such as MEF2A, MEF2B and MEF2C. During muscle differentiation, it shuttles into the cytoplasm, allowing the expression of myocyte enhancer factors. Positively regulates the transcriptional repressor activity of FOXP3. Serves as a corepressor of RARA, causing its deacetylation and inhibition of RARE DNA element binding. In association with RARA, plays a role in the repression of microRNA-10a and thereby in the inflammatory response. Also acetylates non-histone proteins, such as ALKBH5. The chain is Histone deacetylase 7 (Hdac7) from Mus musculus (Mouse).